A 426-amino-acid polypeptide reads, in one-letter code: Histidinol dehydrogenase (426 aa).

Positions 126, 188, and 210 each coordinate NAD(+). Substrate is bound by residues S233, Q255, and H258. Positions 255 and 258 each coordinate Zn(2+). Residues E323 and H324 each act as proton acceptor in the active site. Residues H324, D357, E411, and H416 each contribute to the substrate site. Zn(2+) is bound at residue D357. A Zn(2+)-binding site is contributed by H416.

Belongs to the histidinol dehydrogenase family. Zn(2+) serves as cofactor.

The enzyme catalyses L-histidinol + 2 NAD(+) + H2O = L-histidine + 2 NADH + 3 H(+). It participates in amino-acid biosynthesis; L-histidine biosynthesis; L-histidine from 5-phospho-alpha-D-ribose 1-diphosphate: step 9/9. In terms of biological role, catalyzes the sequential NAD-dependent oxidations of L-histidinol to L-histidinaldehyde and then to L-histidine. This chain is Histidinol dehydrogenase, found in Heliobacterium mobile (Heliobacillus mobilis).